The primary structure comprises 497 residues: Cytoplasmic dynein 1 light intermediate chain 2 (497 aa).

An ATP-binding site is contributed by 61 to 68 (GEDGSGKT). Disordered regions lie at residues 187 to 206 (PEEG…SGSD), 366 to 408 (QQES…IKNN), 423 to 461 (LSKK…TEQC), and 474 to 497 (QEEL…ENEA). Ser194, Ser369, and Ser377 each carry phosphoserine. Arg383 carries the post-translational modification Omega-N-methylarginine. Residues 423 to 444 (LSKKTGSPGSPSAGGVQSTAKK) are compositionally biased toward polar residues. Phosphothreonine is present on Thr427. 2 positions are modified to phosphoserine: Ser429 and Ser432. Over residues 476–485 (ELDRMTRKPD) the composition is skewed to basic and acidic residues. A compositionally biased stretch (polar residues) spans 487 to 497 (MVTNSSTENEA).

Belongs to the dynein light intermediate chain family. Homodimer. The cytoplasmic dynein 1 complex consists of two catalytic heavy chains (HCs) and a number of non-catalytic subunits presented by intermediate chains (ICs), light intermediate chains (LICs) and light chains (LCs); the composition seems to vary in respect to the IC, LIC and LC composition. The heavy chain homodimer serves as a scaffold for the probable homodimeric assembly of the respective non-catalytic subunits. The ICs and LICs bind directly to the HC dimer and the LCs assemble on the IC dimer. Self-associates. Interacts with DYNC1H1; DYNC1LI1 and DYNC1LI2 bind mutually exclusive to DYNC1H1. As to expression, ubiquitous.

The protein localises to the cytoplasm. It is found in the cytoskeleton. Acts as one of several non-catalytic accessory components of the cytoplasmic dynein 1 complex that are thought to be involved in linking dynein to cargos and to adapter proteins that regulate dynein function. Cytoplasmic dynein 1 acts as a motor for the intracellular retrograde motility of vesicles and organelles along microtubules. May play a role in binding dynein to membranous organelles or chromosomes. This is Cytoplasmic dynein 1 light intermediate chain 2 (Dync1li2) from Rattus norvegicus (Rat).